The primary structure comprises 272 residues: Putative phosphoenolpyruvate synthase regulatory protein (272 aa).

152–159 (GVSRSGKT) serves as a coordination point for ADP.

It belongs to the pyruvate, phosphate/water dikinase regulatory protein family. PSRP subfamily.

It catalyses the reaction [pyruvate, water dikinase] + ADP = [pyruvate, water dikinase]-phosphate + AMP + H(+). The enzyme catalyses [pyruvate, water dikinase]-phosphate + phosphate + H(+) = [pyruvate, water dikinase] + diphosphate. In terms of biological role, bifunctional serine/threonine kinase and phosphorylase involved in the regulation of the phosphoenolpyruvate synthase (PEPS) by catalyzing its phosphorylation/dephosphorylation. The protein is Putative phosphoenolpyruvate synthase regulatory protein of Hahella chejuensis (strain KCTC 2396).